A 497-amino-acid chain; its full sequence is MPTKFEFSFSKSHRPAGGVAVLLQAAGAKEAAGAAVADPESVLAKAAKIGKFTGKALSTLDVIAPHGSPADRIVLLGVGHAAGMGDHDWLKAGGAAAAKLRSAEKITVFLDAPGIEVTGKAAADFALGMEMNAYSFESYKTRKSDDEPKTTQKPVKVTIVTATVIAAKKAFGTAQAVGEGVFLARDLVNEPANVLGPVEFAARAKELEKLGVEVEILTEREMKKLGMGALLGVAQGSSRPPRLVVMQWKGGKAKDKSVAFIGKGVVFDTGGISIKPASGMEDMKGDMGGAAAVTGLMHVLAARKAAVNAIGIIGLVENMPDGSAQRPGDIVTSMSGQTIEVINTDAEGRLVLGDALWYCNDRFKPQLMIDLATLTGAIMVALSNHYAGLFSNDDRLAEQLLAAGLVTQERLWRMPLGKEYDKMIDSKFADMKNTGGRHGGSVTAAQFLKRFVKDTPWAHLDIAGTAMGSPTDELNQSWGSGFGVRLLDQLVRANYES.

2 residues coordinate Mn(2+): K263 and D268. The active site involves K275. 3 residues coordinate Mn(2+): D286, D345, and E347. Residue R349 is part of the active site.

It belongs to the peptidase M17 family. Requires Mn(2+) as cofactor.

It localises to the cytoplasm. It carries out the reaction Release of an N-terminal amino acid, Xaa-|-Yaa-, in which Xaa is preferably Leu, but may be other amino acids including Pro although not Arg or Lys, and Yaa may be Pro. Amino acid amides and methyl esters are also readily hydrolyzed, but rates on arylamides are exceedingly low.. The catalysed reaction is Release of an N-terminal amino acid, preferentially leucine, but not glutamic or aspartic acids.. Presumably involved in the processing and regular turnover of intracellular proteins. Catalyzes the removal of unsubstituted N-terminal amino acids from various peptides. This chain is Probable cytosol aminopeptidase, found in Sinorhizobium medicae (strain WSM419) (Ensifer medicae).